A 516-amino-acid chain; its full sequence is Cytochrome P450 monooxygenase ntnM (516 aa).

The helical transmembrane segment at 22-42 threads the bilayer; that stretch reads IINVILSIAAIALIRALAISI. C453 is a binding site for heme.

This sequence belongs to the cytochrome P450 family. Heme is required as a cofactor.

The protein localises to the membrane. Its pathway is secondary metabolite biosynthesis; terpenoid biosynthesis. Cytochrome P450 monooxygenase; part of the gene cluster that mediates the biosynthesis of the meroterpenoids nectripenoids A and B, as well as cochliquninone D and isocochliquninone E. The pathway probably begins with the HR-PKS ntnH that catalyzes two chain-extension steps to form a reduced triketide, which then primes the SAT domain in the NR-PKS ntnG to initiate three more cycles of extension to give a linear hexaketide corresponding to the polyketide part of nectripenoids. The FAD-dependent monooxygenase ntnJ then performs an oxidative decarboxylation at C11 of the ntnH/ntnG product, via an electrophilic aromatic hydroxylation with concomitant ipso-decarboxylation. The membrane-bound polyprenyl transferase ntnF then introduces a farnesyl group before the FAD-dependent monooxygenase ntnK functions as the first epoxidase on terminal C12'-C13' olefin, followed by a second epoxidation on C7'-C8' catalyzed by ntnA. The terpene cyclase/mutase ntnI then initiates the sequential tricyclic ring formation through protonation of the terminal epoxide and catalyzes the regioselective and stereoselective 6/6/6-tricyclic ring formation. The cytochrome P450 monooxygenase ntnM may then hydroxylate C1'. The chain is Cytochrome P450 monooxygenase ntnM from Nectria sp.